The primary structure comprises 344 residues: Protein RecA (344 aa).

An ATP-binding site is contributed by 65–72 (GPESSGKT).

The protein belongs to the RecA family.

The protein resides in the cytoplasm. Functionally, can catalyze the hydrolysis of ATP in the presence of single-stranded DNA, the ATP-dependent uptake of single-stranded DNA by duplex DNA, and the ATP-dependent hybridization of homologous single-stranded DNAs. It interacts with LexA causing its activation and leading to its autocatalytic cleavage. This chain is Protein RecA, found in Campylobacter lari.